Consider the following 392-residue polypeptide: Cellobiose 2-epimerase (392 aa).

Belongs to the cellobiose 2-epimerase family.

It carries out the reaction D-cellobiose = beta-D-glucosyl-(1-&gt;4)-D-mannopyranose. Catalyzes the reversible epimerization of cellobiose to 4-O-beta-D-glucopyranosyl-D-mannose (Glc-Man). Can also epimerize cellotriose to Glc-Glc-Man, cellotetraose to Glc-Glc-Glc-Man, lactose to epilactose, and mannobiose to 4-O-beta-D-mannopyranosyl-D-glucopyranose (Man-Glc). May function as a mannobiose 2-epimerase in vivo and be involved in a mannan catabolic pathway which feeds into glycolysis. In Bacteroides fragilis (strain ATCC 25285 / DSM 2151 / CCUG 4856 / JCM 11019 / LMG 10263 / NCTC 9343 / Onslow / VPI 2553 / EN-2), this protein is Cellobiose 2-epimerase (bfce).